Consider the following 805-residue polypeptide: Probable exo-1,4-beta-xylosidase xlnD (805 aa).

The first 17 residues, 1-17 (MAVAALALLALLPQALG), serve as a signal peptide directing secretion. 5 N-linked (GlcNAc...) asparagine glycosylation sites follow: asparagine 20, asparagine 115, asparagine 140, asparagine 235, and asparagine 244. The active site involves aspartate 308. N-linked (GlcNAc...) asparagine glycans are attached at residues asparagine 350, asparagine 383, asparagine 405, asparagine 434, asparagine 445, asparagine 486, asparagine 490, asparagine 622, asparagine 653, asparagine 667, asparagine 689, and asparagine 711.

Belongs to the glycosyl hydrolase 3 family.

The protein resides in the secreted. It catalyses the reaction Hydrolysis of (1-&gt;4)-beta-D-xylans, to remove successive D-xylose residues from the non-reducing termini.. It participates in glycan degradation; xylan degradation. In terms of biological role, xylan 1,4-beta-xylosidase involved in the hydrolysis of xylan, a major structural heterogeneous polysaccharide found in plant biomass representing the second most abundant polysaccharide in the biosphere, after cellulose. In Aspergillus aculeatus, this protein is Probable exo-1,4-beta-xylosidase xlnD (xlnD).